The chain runs to 204 residues: Imidazoleglycerol-phosphate dehydratase (204 aa).

Belongs to the imidazoleglycerol-phosphate dehydratase family.

The protein localises to the cytoplasm. The catalysed reaction is D-erythro-1-(imidazol-4-yl)glycerol 3-phosphate = 3-(imidazol-4-yl)-2-oxopropyl phosphate + H2O. It participates in amino-acid biosynthesis; L-histidine biosynthesis; L-histidine from 5-phospho-alpha-D-ribose 1-diphosphate: step 6/9. The chain is Imidazoleglycerol-phosphate dehydratase from Albidiferax ferrireducens (strain ATCC BAA-621 / DSM 15236 / T118) (Rhodoferax ferrireducens).